The primary structure comprises 479 residues: Glycogen synthase (479 aa).

Lys-15 contacts ADP-alpha-D-glucose.

Belongs to the glycosyltransferase 1 family. Bacterial/plant glycogen synthase subfamily.

It carries out the reaction [(1-&gt;4)-alpha-D-glucosyl](n) + ADP-alpha-D-glucose = [(1-&gt;4)-alpha-D-glucosyl](n+1) + ADP + H(+). The protein operates within glycan biosynthesis; glycogen biosynthesis. Functionally, synthesizes alpha-1,4-glucan chains using ADP-glucose. This chain is Glycogen synthase, found in Pectobacterium carotovorum subsp. carotovorum (strain PC1).